A 497-amino-acid polypeptide reads, in one-letter code: Glycerol kinase (497 aa).

Threonine 12 lines the ADP pocket. ATP-binding residues include threonine 12, threonine 13, and serine 14. Residue threonine 12 participates in sn-glycerol 3-phosphate binding. An ADP-binding site is contributed by arginine 16. 4 residues coordinate sn-glycerol 3-phosphate: arginine 82, glutamate 83, tyrosine 134, and aspartate 243. 5 residues coordinate glycerol: arginine 82, glutamate 83, tyrosine 134, aspartate 243, and glutamine 244. Residues threonine 265 and glycine 308 each contribute to the ADP site. ATP contacts are provided by threonine 265, glycine 308, glutamine 312, and glycine 409. Glycine 409 and asparagine 413 together coordinate ADP.

The protein belongs to the FGGY kinase family.

The catalysed reaction is glycerol + ATP = sn-glycerol 3-phosphate + ADP + H(+). Its pathway is polyol metabolism; glycerol degradation via glycerol kinase pathway; sn-glycerol 3-phosphate from glycerol: step 1/1. Its activity is regulated as follows. Inhibited by fructose 1,6-bisphosphate (FBP). In terms of biological role, key enzyme in the regulation of glycerol uptake and metabolism. Catalyzes the phosphorylation of glycerol to yield sn-glycerol 3-phosphate. This is Glycerol kinase from Oleidesulfovibrio alaskensis (strain ATCC BAA-1058 / DSM 17464 / G20) (Desulfovibrio alaskensis).